Here is a 364-residue protein sequence, read N- to C-terminus: Probable dual-specificity RNA methyltransferase RlmN (364 aa).

Glu-106 acts as the Proton acceptor in catalysis. One can recognise a Radical SAM core domain in the interval 112–351; sequence YPHRNTVCIS…CTVRDTRGRE (240 aa). The cysteines at positions 119 and 356 are disulfide-linked. [4Fe-4S] cluster is bound by residues Cys-126, Cys-130, and Cys-133. Residues 177–178, Ser-211, 234–236, and Asn-313 contribute to the S-adenosyl-L-methionine site; these read GE and SLH. Cys-356 serves as the catalytic S-methylcysteine intermediate.

Belongs to the radical SAM superfamily. RlmN family. It depends on [4Fe-4S] cluster as a cofactor.

The protein localises to the cytoplasm. The enzyme catalyses adenosine(2503) in 23S rRNA + 2 reduced [2Fe-2S]-[ferredoxin] + 2 S-adenosyl-L-methionine = 2-methyladenosine(2503) in 23S rRNA + 5'-deoxyadenosine + L-methionine + 2 oxidized [2Fe-2S]-[ferredoxin] + S-adenosyl-L-homocysteine. It carries out the reaction adenosine(37) in tRNA + 2 reduced [2Fe-2S]-[ferredoxin] + 2 S-adenosyl-L-methionine = 2-methyladenosine(37) in tRNA + 5'-deoxyadenosine + L-methionine + 2 oxidized [2Fe-2S]-[ferredoxin] + S-adenosyl-L-homocysteine. In terms of biological role, specifically methylates position 2 of adenine 2503 in 23S rRNA and position 2 of adenine 37 in tRNAs. This chain is Probable dual-specificity RNA methyltransferase RlmN, found in Mycolicibacterium paratuberculosis (strain ATCC BAA-968 / K-10) (Mycobacterium paratuberculosis).